The primary structure comprises 430 residues: C4-dicarboxylate transport protein (430 aa).

The next 8 helical transmembrane spans lie at Val-9–Pro-29, Leu-45–Met-65, Leu-79–Leu-99, Gly-149–Gly-169, Val-185–Met-205, Leu-223–Ala-243, Ile-308–Met-328, and Ala-356–Ile-376.

The protein belongs to the dicarboxylate/amino acid:cation symporter (DAACS) (TC 2.A.23) family.

The protein resides in the cell inner membrane. Responsible for the transport of dicarboxylates such as succinate, fumarate, and malate from the periplasm across the membrane. The chain is C4-dicarboxylate transport protein from Burkholderia orbicola (strain AU 1054).